A 324-amino-acid chain; its full sequence is tRNA dimethylallyltransferase (324 aa).

Glycine 17–threonine 24 serves as a coordination point for ATP. A substrate-binding site is contributed by threonine 19 to threonine 24. Interaction with substrate tRNA stretches follow at residues aspartate 42–leucine 45, glutamine 166–arginine 170, arginine 251–arginine 256, and lysine 284–arginine 291.

It belongs to the IPP transferase family. As to quaternary structure, monomer. Requires Mg(2+) as cofactor.

It catalyses the reaction adenosine(37) in tRNA + dimethylallyl diphosphate = N(6)-dimethylallyladenosine(37) in tRNA + diphosphate. Catalyzes the transfer of a dimethylallyl group onto the adenine at position 37 in tRNAs that read codons beginning with uridine, leading to the formation of N6-(dimethylallyl)adenosine (i(6)A). This chain is tRNA dimethylallyltransferase, found in Burkholderia orbicola (strain AU 1054).